The chain runs to 676 residues: Zinc finger CCCH domain-containing protein 38 (676 aa).

5 disordered regions span residues 1-134 (MEMS…DHLF), 172-217 (SSDY…RSSN), 245-307 (RKQP…SWID), 487-506 (SVQPNQATTQSNVVSSNPNQ), and 533-594 (IQEV…DPKG). The segment covering 12-21 (SKWDSKEDTH) has biased composition (basic and acidic residues). Over residues 58 to 79 (RVSQNNDNSYFSEQDGTRQQFV) the composition is skewed to polar residues. Basic and acidic residues-rich tracts occupy residues 101–110 (ARRDAGSYDR), 124–134 (EFNKRGSDHLF), and 192–212 (SEFTGEKETQRRDGGDGEGGF). The segment at 214–243 (RSSNIPCKFFAAGTGFCRNGKYCRFSHHVA) adopts a C3H1-type zinc-finger fold. Positions 251 to 262 (NNNNFYRQDNNN) are enriched in low complexity. A compositionally biased stretch (basic and acidic residues) spans 269–278 (KWNDVERLDN). Positions 538–562 (LDPKENGDKKTDEASKEEEGKKTGE) are enriched in basic and acidic residues. Residues 563 to 583 (DTNDAENVVDEDEDGDDDGSD) are compositionally biased toward acidic residues. Residues 584-594 (EENKKEKDPKG) are compositionally biased toward basic and acidic residues.

The chain is Zinc finger CCCH domain-containing protein 38 from Arabidopsis thaliana (Mouse-ear cress).